The sequence spans 837 residues: Intestinal mucin-like protein (837 aa).

4 repeat units span residues 17-27 (PSTPSTPPPST), 28-38 (PTTPTSSQTTT), 39-50 (PSTPSTTSSKST), and 51-62 (PSTPQSTSSKST). Positions 17-70 (PSTPSTPPPSTPTTPTSSQTTTPSTPSTTSSKSTPSTPQSTSSKSTPSTPPKTT) are 5 X 11 AA approximate tandem repeats. Positions 17 to 75 (PSTPSTPPPSTPTTPTSSQTTTPSTPSTTSSKSTPSTPQSTSSKSTPSTPPKTTLPGCL) are disordered. The span at 29-70 (TTPTSSQTTTPSTPSTTSSKSTPSTPQSTSSKSTPSTPPKTT) shows a compositional bias: low complexity. The 5; truncated repeat unit spans residues 63 to 70 (PSTPPKTT). N-linked (GlcNAc...) asparagine glycosylation is found at Asn91 and Asn164. Positions 141–324 (CYCTGWGDPH…VNDPSKPHCP (184 aa)) constitute a VWFD domain. 3 disulfides stabilise this stretch: Cys143–Cys284, Cys165–Cys323, and Cys189–Cys197. The interval 149-837 (PHFVTFDGLY…RSSPRLLGRK (689 aa)) is probably important for disulfide-bond mediated mucin polymerization (link domain). Residues Asn278, Asn289, Asn344, Asn410, Asn444, Asn515, Asn538, Asn612, Asn627, Asn695, Asn727, and Asn749 are each glycosylated (N-linked (GlcNAc...) asparagine). VWFC domains lie at 472-543 (CGCV…TSCK) and 581-648 (GVCV…KKCQ). 4 disulfide bridges follow: Cys732-Cys779, Cys746-Cys793, Cys755-Cys809, and Cys759-Cys811. The region spanning 732-817 (CSAIPVMKEI…SCLCQGTVCE (86 aa)) is the CTCK domain.

In terms of assembly, multimeric. As to expression, coats the epithelia of the intestines.

The protein localises to the secreted. The sequence is that of Intestinal mucin-like protein from Rattus norvegicus (Rat).